A 280-amino-acid chain; its full sequence is Pantothenate synthetase (280 aa).

31 to 38 contributes to the ATP binding site; it reads MGNLHVGH. The active-site Proton donor is His-38. Gln-62 contacts (R)-pantoate. Beta-alanine is bound at residue Gln-62. Residue 150-153 participates in ATP binding; that stretch reads GKKD. Gln-156 contacts (R)-pantoate. ATP is bound by residues Val-179 and 187-190; that span reads MSSR.

This sequence belongs to the pantothenate synthetase family. In terms of assembly, homodimer.

It is found in the cytoplasm. The catalysed reaction is (R)-pantoate + beta-alanine + ATP = (R)-pantothenate + AMP + diphosphate + H(+). It participates in cofactor biosynthesis; (R)-pantothenate biosynthesis; (R)-pantothenate from (R)-pantoate and beta-alanine: step 1/1. Functionally, catalyzes the condensation of pantoate with beta-alanine in an ATP-dependent reaction via a pantoyl-adenylate intermediate. The polypeptide is Pantothenate synthetase (Xanthomonas oryzae pv. oryzae (strain MAFF 311018)).